Consider the following 394-residue polypeptide: S-adenosylmethionine synthase 2 (394 aa).

Glu11 is a Mg(2+) binding site. Position 17 (His17) interacts with ATP. Glu45 lines the K(+) pocket. The L-methionine site is built by Glu58 and Gln101. ATP-binding positions include 169-171, 237-240, Asp248, 254-255, Ala271, Lys275, and Lys279; these read DGK, SGRF, and RK. Asp248 lines the L-methionine pocket. Lys279 contacts L-methionine.

It belongs to the AdoMet synthase family. Homotetramer. Mn(2+) is required as a cofactor. Requires Mg(2+) as cofactor. It depends on Co(2+) as a cofactor. The cofactor is K(+).

It is found in the cytoplasm. It catalyses the reaction L-methionine + ATP + H2O = S-adenosyl-L-methionine + phosphate + diphosphate. It functions in the pathway amino-acid biosynthesis; S-adenosyl-L-methionine biosynthesis; S-adenosyl-L-methionine from L-methionine: step 1/1. Its function is as follows. Catalyzes the formation of S-adenosylmethionine from methionine and ATP. The reaction comprises two steps that are both catalyzed by the same enzyme: formation of S-adenosylmethionine (AdoMet) and triphosphate, and subsequent hydrolysis of the triphosphate. The sequence is that of S-adenosylmethionine synthase 2 (SAM2) from Hordeum vulgare (Barley).